Consider the following 1221-residue polypeptide: Probable serine/threonine-protein kinase DDB_G0286465 (1221 aa).

Disordered regions lie at residues 1–37, 104–133, and 173–263; these read MTLR…SPYT, FSPS…NDNQ, and ENNS…NNNE. 4 stretches are compositionally biased toward low complexity: residues 24–37, 112–127, 173–192, and 204–263; these read SSVS…SPYT, KNNN…NNNY, ENNS…NMQK, and NNNN…NNNE. One can recognise a Protein kinase domain in the interval 186–627; it reads INNNMQKTGG…PYKLLDHPFF (442 aa). 192-200 contacts ATP; sequence KTGGRNGSV. Lys-271 is an ATP binding site. The segment covering 324–344 has biased composition (low complexity); it reads NVNNNNSNNNNNNSNNNITNS. The disordered stretch occupies residues 324–346; it reads NVNNNNSNNNNNNSNNNITNSRY. Asp-448 serves as the catalytic Proton acceptor. Composition is skewed to low complexity over residues 538 to 550 and 559 to 584; these read SPSS…TSTS and DSSS…SLPK. Disordered stretches follow at residues 538–604, 712–782, 823–858, 959–1008, and 1105–1152; these read SPSS…PEKR, PNLS…KEKL, KFEK…PPLP, KENI…SYCN, and KKQE…QQEK. Residues 591 to 604 show a composition bias toward basic and acidic residues; sequence RSKDNQSKLDPEKR. The segment covering 725-738 has biased composition (low complexity); it reads KKQLQQYQQQQKQQ. Acidic residues predominate over residues 746-756; sequence DDEEEKEEEEK. 2 stretches are compositionally biased toward basic and acidic residues: residues 757 to 769 and 823 to 850; these read EKEK…KEKE and KFEK…KDDA. The segment covering 959 to 993 has biased composition (low complexity); it reads KENIINFHNNNNNNNNNNNNNNNNNNNNNNNNNNN.

It belongs to the protein kinase superfamily. Ser/Thr protein kinase family.

The enzyme catalyses L-seryl-[protein] + ATP = O-phospho-L-seryl-[protein] + ADP + H(+). It carries out the reaction L-threonyl-[protein] + ATP = O-phospho-L-threonyl-[protein] + ADP + H(+). The chain is Probable serine/threonine-protein kinase DDB_G0286465 from Dictyostelium discoideum (Social amoeba).